The sequence spans 614 residues: ETS-related transcription factor Elf-1 (614 aa).

4 positions are modified to phosphoserine: S110, S163, S167, and S168. The disordered stretch occupies residues 159–199 (TYAHSPGPSSPEQPKRKKGRKTKPPRPDSPTTTPNISVKKK). The span at 173 to 182 (KRKKGRKTKP) shows a compositional bias: basic residues. S187 is subject to Phosphoserine. The residue at position 190 (T190) is a Phosphothreonine. The segment at residues 208 to 290 (IYLWEFLLAL…EGQRLVYQFK (83 aa)) is a DNA-binding region (ETS). The segment at 303 to 371 (DPSCSIESSD…VQPSEALRTV (69 aa)) is disordered. Positions 310–335 (SSDPSLSSTATSSRNPASRSRASSSP) are enriched in low complexity. Residue S430 is modified to Phosphoserine.

It belongs to the ETS family. As to quaternary structure, binds to the underphosphorylated form of RB. May interact with other transcription factors in order to regulate specific genes. Interacts with RUNX1.

It is found in the nucleus. Its function is as follows. Transcription factor that activates the LYN and BLK promoters. The polypeptide is ETS-related transcription factor Elf-1 (ELF1) (Bos taurus (Bovine)).